The following is a 216-amino-acid chain: Pyrophosphatase PpaX (216 aa).

The active-site Nucleophile is aspartate 9.

Belongs to the HAD-like hydrolase superfamily. PpaX family. Mg(2+) serves as cofactor.

The enzyme catalyses diphosphate + H2O = 2 phosphate + H(+). Hydrolyzes pyrophosphate formed during P-Ser-HPr dephosphorylation by HPrK/P. Might play a role in controlling the intracellular pyrophosphate pool. In Bacillus cereus (strain G9842), this protein is Pyrophosphatase PpaX.